Consider the following 141-residue polypeptide: Small ribosomal subunit protein bS6 (141 aa).

A disordered region spans residues 96–141 (VTGPSAMMKTVEREEFRKASQAGNQTTAPAASPADHAAAPASADRS). A compositionally biased stretch (low complexity) spans 123 to 141 (APAASPADHAAAPASADRS).

It belongs to the bacterial ribosomal protein bS6 family.

Functionally, binds together with bS18 to 16S ribosomal RNA. This is Small ribosomal subunit protein bS6 from Verminephrobacter eiseniae (strain EF01-2).